The sequence spans 1150 residues: ATP-dependent helicase/deoxyribonuclease subunit B (1150 aa).

ATP is bound at residue 8 to 15 (GRAGSGKS). Residues Cys786, Cys1106, Cys1109, and Cys1115 each contribute to the [4Fe-4S] cluster site.

The protein belongs to the helicase family. AddB/RexB type 1 subfamily. In terms of assembly, heterodimer of AddA and AddB. Mg(2+) serves as cofactor. The cofactor is [4Fe-4S] cluster.

Its function is as follows. The heterodimer acts as both an ATP-dependent DNA helicase and an ATP-dependent, dual-direction single-stranded exonuclease. Recognizes the chi site generating a DNA molecule suitable for the initiation of homologous recombination. The AddB subunit has 5' -&gt; 3' nuclease activity but not helicase activity. The protein is ATP-dependent helicase/deoxyribonuclease subunit B of Clostridium botulinum (strain Langeland / NCTC 10281 / Type F).